We begin with the raw amino-acid sequence, 245 residues long: Probable phosphatase CKO_02035 (245 aa).

Zn(2+) is bound by residues H7, H9, H15, H40, E73, H101, H131, D192, and H194.

It belongs to the PHP family. In terms of assembly, homotrimer. Requires Zn(2+) as cofactor.

This is Probable phosphatase CKO_02035 from Citrobacter koseri (strain ATCC BAA-895 / CDC 4225-83 / SGSC4696).